We begin with the raw amino-acid sequence, 199 residues long: Holliday junction branch migration complex subunit RuvA (199 aa).

Positions 1 to 64 (MIALLTGKLA…EDAINLYGFR (64 aa)) are domain I. The domain II stretch occupies residues 65-143 (TMEEKEMFQL…KLGHGPLQQD (79 aa)). Residues 144 to 148 (VAPAD) are flexible linker. A domain III region spans residues 149–199 (AHNDMRDDVVSALVNLGYKEAVVQKTVDEIGVAADATVESLLKQALKKLMK).

The protein belongs to the RuvA family. Homotetramer. Forms an RuvA(8)-RuvB(12)-Holliday junction (HJ) complex. HJ DNA is sandwiched between 2 RuvA tetramers; dsDNA enters through RuvA and exits via RuvB. An RuvB hexamer assembles on each DNA strand where it exits the tetramer. Each RuvB hexamer is contacted by two RuvA subunits (via domain III) on 2 adjacent RuvB subunits; this complex drives branch migration. In the full resolvosome a probable DNA-RuvA(4)-RuvB(12)-RuvC(2) complex forms which resolves the HJ.

The protein resides in the cytoplasm. In terms of biological role, the RuvA-RuvB-RuvC complex processes Holliday junction (HJ) DNA during genetic recombination and DNA repair, while the RuvA-RuvB complex plays an important role in the rescue of blocked DNA replication forks via replication fork reversal (RFR). RuvA specifically binds to HJ cruciform DNA, conferring on it an open structure. The RuvB hexamer acts as an ATP-dependent pump, pulling dsDNA into and through the RuvAB complex. HJ branch migration allows RuvC to scan DNA until it finds its consensus sequence, where it cleaves and resolves the cruciform DNA. The sequence is that of Holliday junction branch migration complex subunit RuvA from Geotalea daltonii (strain DSM 22248 / JCM 15807 / FRC-32) (Geobacter daltonii).